Reading from the N-terminus, the 263-residue chain is Acetylglutamate kinase (263 aa).

Residues 48 to 49 (GG), R70, and N162 contribute to the substrate site.

The protein belongs to the acetylglutamate kinase family. ArgB subfamily.

It localises to the cytoplasm. It carries out the reaction N-acetyl-L-glutamate + ATP = N-acetyl-L-glutamyl 5-phosphate + ADP. It functions in the pathway amino-acid biosynthesis; L-arginine biosynthesis; N(2)-acetyl-L-ornithine from L-glutamate: step 2/4. In terms of biological role, catalyzes the ATP-dependent phosphorylation of N-acetyl-L-glutamate. This chain is Acetylglutamate kinase, found in Vibrio vulnificus (strain CMCP6).